Reading from the N-terminus, the 133-residue chain is Large-conductance mechanosensitive channel (133 aa).

The next 2 helical transmembrane spans lie at 17-37 and 73-93; these read AFIL…GGAF and IGSF…LYLA.

The protein belongs to the MscL family. As to quaternary structure, homopentamer.

The protein resides in the cell inner membrane. Functionally, channel that opens in response to stretch forces in the membrane lipid bilayer. May participate in the regulation of osmotic pressure changes within the cell. The polypeptide is Large-conductance mechanosensitive channel (Synechococcus elongatus (strain ATCC 33912 / PCC 7942 / FACHB-805) (Anacystis nidulans R2)).